We begin with the raw amino-acid sequence, 280 residues long: Protein lyl-1 (280 aa).

The disordered stretch occupies residues 1-60 (MCPPQAQAEVGPTMTEKAEMVCAPSPAPAPPPKPASPGPPQVEEVGHRGGSSPPRLPPGV). Over residues 25–40 (SPAPAPPPKPASPGPP) the composition is skewed to pro residues. The bHLH domain occupies 150-202 (ARRVFTNSRERWRQQNVNGAFAELRKLLPTHPPDRKLSKNEVLRLAMKYIGFL). A disordered region spans residues 214 to 280 (AAGPTPPGPR…EQTALSPEVR (67 aa)). Positions 229-245 (RVPDDGARRGSGRRAEA) are enriched in basic and acidic residues. Residues 257–267 (PDGSPGGAARP) show a composition bias toward low complexity. Phosphoserine is present on residues S260 and S276.

As to quaternary structure, efficient DNA binding requires dimerization with another bHLH protein.

The protein resides in the nucleus. This chain is Protein lyl-1 (LYL1), found in Homo sapiens (Human).